Here is a 147-residue protein sequence, read N- to C-terminus: Shadow of prion protein (147 aa).

An N-terminal signal peptide occupies residues 1–24 (MNWTAATCWALLLAAAFLCDSCSA). A compositionally biased stretch (gly residues) spans 26–43 (GGRGGARGSARGVRGGAR). Positions 26 to 45 (GGRGGARGSARGVRGGARGA) are disordered. N-linked (GlcNAc...) asparagine glycosylation occurs at Asn107. A lipid anchor (GPI-anchor amidated glycine) is attached at Gly122. Residues 123–147 (SGSVHSPRICLLLGGTLGALELLRP) constitute a propeptide, removed in mature form.

The protein belongs to the SPRN family. N-glycosylated. In terms of tissue distribution, mainly expressed in brain (at protein level). In brain, it is highly expressed in the hippocampus and cerebellum and is also expressed at lower level in other areas of the brain including the cerebral cortex, the thalamus and the medulla. In hippocampus and cerebellum it is highly expressed in the cell bodies of pyramidal cells and Purkinje cells, respectively.

The protein localises to the cell membrane. Prion-like protein that has PrP(C)-like neuroprotective activity. May act as a modulator for the biological actions of normal and abnormal PrP. This is Shadow of prion protein (Sprn) from Mus musculus (Mouse).